The following is a 380-amino-acid chain: Set1 complex component swd3 (380 aa).

WD repeat units lie at residues 52 to 91 (GHEK…LECT), 94 to 133 (GHYR…SVRC), 136 to 177 (GHTN…RMLP), 179 to 219 (HSEP…KTLV), 221 to 262 (PINV…RIFD), 291 to 330 (NDSS…IIDD), and 335 to 374 (SDDP…SKHE). Ser-379 bears the Phosphoserine mark.

Component of the Set1 complex composed of ash2, sdc1, set1, shg1, spp1, swd1, swd2 and swd3.

The protein localises to the nucleus. Functionally, the Set1 complex specifically methylates 'Lys-4' of histone H3. The polypeptide is Set1 complex component swd3 (Schizosaccharomyces pombe (strain 972 / ATCC 24843) (Fission yeast)).